Reading from the N-terminus, the 315-residue chain is MSDCQHQLKLFALNSNMKLAKEIAEVMGIELGKCSVSRFSDGEIQINIEESIRGDDVFVIQSTSVPVNEHLMELLIMIDALKRASARTINIVMPYYGYARQDRKARSRNPITAKLVANLLETAGASRVITLDLHAPQIQGFFDIPIDHLMGVPILADYFKSKQLEDIVVVSPDHGGVTRARKLADRLKAPIAIIDKRRPKPNVAEVMNIVGQVAGKTAILIDDIIDTAGTITLAANALAESGAKEVYACCTHPVLSGPAIERIQSSKIKELVVTNSIALPEEKKIDKIVKLSVRPLIAEAITRVYEMKSVSVLFD.

Residues 41 to 43 (DGE) and 100 to 101 (RQ) each bind ATP. Mg(2+)-binding residues include His134 and Asp173. Lys196 is a catalytic residue. D-ribose 5-phosphate-binding positions include Arg198, Asp222, and 226-230 (DTAGT).

It belongs to the ribose-phosphate pyrophosphokinase family. Class I subfamily. In terms of assembly, homohexamer. Mg(2+) serves as cofactor.

Its subcellular location is the cytoplasm. The enzyme catalyses D-ribose 5-phosphate + ATP = 5-phospho-alpha-D-ribose 1-diphosphate + AMP + H(+). It participates in metabolic intermediate biosynthesis; 5-phospho-alpha-D-ribose 1-diphosphate biosynthesis; 5-phospho-alpha-D-ribose 1-diphosphate from D-ribose 5-phosphate (route I): step 1/1. Its function is as follows. Involved in the biosynthesis of the central metabolite phospho-alpha-D-ribosyl-1-pyrophosphate (PRPP) via the transfer of pyrophosphoryl group from ATP to 1-hydroxyl of ribose-5-phosphate (Rib-5-P). This is Ribose-phosphate pyrophosphokinase from Bacillus caldolyticus.